The chain runs to 278 residues: Transcription initiation factor TFIID subunit 9 (278 aa).

The tract at residues 193–278 (TTTKTVGSSG…EEEEFEFVTN (86 aa)) is disordered. The segment covering 200–210 (SSGGSGGGGGQ) has biased composition (gly residues). Residues 231–240 (AAAVGSIAGA) are compositionally biased toward low complexity. Positions 241-259 (SGSGAGSASGGGGGGGSSG) are enriched in gly residues. Positions 269-278 (EEEEFEFVTN) are enriched in acidic residues.

It belongs to the TAF9 family. Belongs to the TFIID complex which is composed of TATA binding protein (Tbp) and a number of TBP-associated factors (TAFs). Taf9 and Taf6 exist as a heterotetramer. Interacts with e(y)2.

It is found in the nucleus. In terms of biological role, TFIID is a multimeric protein complex that plays a central role in mediating promoter responses to various activators and repressors. The polypeptide is Transcription initiation factor TFIID subunit 9 (Drosophila melanogaster (Fruit fly)).